The sequence spans 261 residues: Carnitinyl-CoA dehydratase (261 aa).

The Nucleophile role is filled by glutamate 111. Glutamate 131 acts as the Proton acceptor in catalysis.

This sequence belongs to the enoyl-CoA hydratase/isomerase family.

The enzyme catalyses (R)-carnitinyl-CoA = crotonobetainyl-CoA + H2O. Its pathway is amine and polyamine metabolism; carnitine metabolism. Functionally, catalyzes the reversible dehydration of L-carnitinyl-CoA to crotonobetainyl-CoA. This Salmonella paratyphi C (strain RKS4594) protein is Carnitinyl-CoA dehydratase.